The following is a 190-amino-acid chain: Glutathione peroxidase 2 (190 aa).

Sec40 is an active-site residue. Residue Sec40 is a non-standard amino acid, selenocysteine.

It belongs to the glutathione peroxidase family. In terms of assembly, homotetramer. Exclusively expressed in the stomach and small intestine.

It is found in the cytoplasm. Its subcellular location is the cytosol. The enzyme catalyses 2 glutathione + H2O2 = glutathione disulfide + 2 H2O. It carries out the reaction a hydroperoxy polyunsaturated fatty acid + 2 glutathione = a hydroxy polyunsaturated fatty acid + glutathione disulfide + H2O. It catalyses the reaction tert-butyl hydroperoxide + 2 glutathione = tert-butanol + glutathione disulfide + H2O. The catalysed reaction is cumene hydroperoxide + 2 glutathione = 2-phenylpropan-2-ol + glutathione disulfide + H2O. The enzyme catalyses (13S)-hydroperoxy-(9Z,11E)-octadecadienoate + 2 glutathione = (13S)-hydroxy-(9Z,11E)-octadecadienoate + glutathione disulfide + H2O. It carries out the reaction (5S)-hydroperoxy-(6E,8Z,11Z,14Z)-eicosatetraenoate + 2 glutathione = (5S)-hydroxy-(6E,8Z,11Z,14Z)-eicosatetraenoate + glutathione disulfide + H2O. It catalyses the reaction (12R)-hydroperoxy-(5Z,8Z,10E,14Z)-eicosatetraenoate + 2 glutathione = (12R)-hydroxy-(5Z,8Z,10E,14Z)-eicosatetraenoate + glutathione disulfide + H2O. The catalysed reaction is (15S)-hydroperoxy-(5Z,8Z,11Z,13E)-eicosatetraenoate + 2 glutathione = (15S)-hydroxy-(5Z,8Z,11Z,13E)-eicosatetraenoate + glutathione disulfide + H2O. Catalyzes the reduction of hydroperoxides in a glutathione-dependent manner thus regulating cellular redox homeostasis. Can reduce small soluble hydroperoxides such as H2O2, cumene hydroperoxide and tert-butyl hydroperoxide, as well as several fatty acid-derived hydroperoxides. Cannot reduce phosphatidycholine hydroperoxide. The polypeptide is Glutathione peroxidase 2 (GPX2) (Macaca fuscata fuscata (Japanese macaque)).